The sequence spans 122 residues: Large ribosomal subunit protein uL14 (122 aa).

The protein belongs to the universal ribosomal protein uL14 family. As to quaternary structure, part of the 50S ribosomal subunit. Forms a cluster with proteins L3 and L19. In the 70S ribosome, L14 and L19 interact and together make contacts with the 16S rRNA in bridges B5 and B8.

Its function is as follows. Binds to 23S rRNA. Forms part of two intersubunit bridges in the 70S ribosome. This chain is Large ribosomal subunit protein uL14, found in Brevibacillus brevis (strain 47 / JCM 6285 / NBRC 100599).